A 257-amino-acid chain; its full sequence is UPF0246 protein Spro_0686 (257 aa).

Belongs to the UPF0246 family.

The sequence is that of UPF0246 protein Spro_0686 from Serratia proteamaculans (strain 568).